The primary structure comprises 226 residues: Ribonuclease 3 (226 aa).

In terms of domain architecture, RNase III spans 6–128 (INRLQRKLGY…LIGAIFLDSD (123 aa)). Glu-41 is a Mg(2+) binding site. Residue Asp-45 is part of the active site. Residues Asp-114 and Glu-117 each coordinate Mg(2+). Residue Glu-117 is part of the active site. Positions 155–225 (DPKTRLQEYL…AEQALKQLEL (71 aa)) constitute a DRBM domain.

Belongs to the ribonuclease III family. In terms of assembly, homodimer. The cofactor is Mg(2+).

Its subcellular location is the cytoplasm. The catalysed reaction is Endonucleolytic cleavage to 5'-phosphomonoester.. Digests double-stranded RNA. Involved in the processing of primary rRNA transcript to yield the immediate precursors to the large and small rRNAs (23S and 16S). Processes some mRNAs, and tRNAs when they are encoded in the rRNA operon. Processes pre-crRNA and tracrRNA of type II CRISPR loci if present in the organism. This Photorhabdus laumondii subsp. laumondii (strain DSM 15139 / CIP 105565 / TT01) (Photorhabdus luminescens subsp. laumondii) protein is Ribonuclease 3.